The sequence spans 553 residues: CTP synthase (553 aa).

The segment at 1–277 is amidoligase domain; that stretch reads MPTEPETDYD…DQYVMEELDI (277 aa). S26 serves as a coordination point for CTP. Position 26 (S26) interacts with UTP. ATP is bound by residues 27 to 32 and D84; that span reads GLGKGI. Residues D84 and E152 each coordinate Mg(2+). Residues 159–161, 198–203, and K234 contribute to the CTP site; these read DIE and KTKPTQ. Residues 198–203 and K234 each bind UTP; that span reads KTKPTQ. Residues 307-544 form the Glutamine amidotransferase type-1 domain; that stretch reads LVGKYDLEDA…LEAVLGDDPH (238 aa). G364 is an L-glutamine binding site. C391 serves as the catalytic Nucleophile; for glutamine hydrolysis. Residues 392 to 395, E415, and R472 each bind L-glutamine; that span reads LGFQ. Active-site residues include H517 and E519.

The protein belongs to the CTP synthase family. In terms of assembly, homotetramer.

It carries out the reaction UTP + L-glutamine + ATP + H2O = CTP + L-glutamate + ADP + phosphate + 2 H(+). It catalyses the reaction L-glutamine + H2O = L-glutamate + NH4(+). The enzyme catalyses UTP + NH4(+) + ATP = CTP + ADP + phosphate + 2 H(+). It functions in the pathway pyrimidine metabolism; CTP biosynthesis via de novo pathway; CTP from UDP: step 2/2. Its activity is regulated as follows. Allosterically activated by GTP, when glutamine is the substrate; GTP has no effect on the reaction when ammonia is the substrate. The allosteric effector GTP functions by stabilizing the protein conformation that binds the tetrahedral intermediate(s) formed during glutamine hydrolysis. Inhibited by the product CTP, via allosteric rather than competitive inhibition. Its function is as follows. Catalyzes the ATP-dependent amination of UTP to CTP with either L-glutamine or ammonia as the source of nitrogen. Regulates intracellular CTP levels through interactions with the four ribonucleotide triphosphates. This chain is CTP synthase, found in Haloarcula marismortui (strain ATCC 43049 / DSM 3752 / JCM 8966 / VKM B-1809) (Halobacterium marismortui).